The chain runs to 102 residues: Carboxysome shell protein CcmK3 (102 aa).

The 87-residue stretch at 4–90 folds into the BMC domain; the sequence is AVGTIQTLGF…PQENVETVMP (87 aa).

It belongs to the bacterial microcompartments protein family. CcmK subfamily. Interacts stably with CcmK4, probably forms heterohexamers with a 1:2 CcmK3:CcmK4 stoichiometry. Bulky residues in the pore region probably preclude the formation of homohexamers by this subunit.

It is found in the carboxysome. A non-essential, minor shell protein of the carboxysome, a polyhedral inclusion where RuBisCO (ribulose bisphosphate carboxylase, rbcL-rbcS) is sequestered. Hexamers form sheets that form the facets of the polyhedral carboxysome. In PCC 7942 there are several CcmK paralogs with presumably functional differences. This subunit probably only makes heterohexamers with CcmK4. The CcmK3-CcmK4 heterohexmers have been suggested to cap other hexamers, perhaps to alter metabolite flux. This Synechococcus elongatus (strain ATCC 33912 / PCC 7942 / FACHB-805) (Anacystis nidulans R2) protein is Carboxysome shell protein CcmK3.